Consider the following 270-residue polypeptide: Tryptophan synthase alpha chain (270 aa).

Active-site proton acceptor residues include Glu-60 and Asp-71.

It belongs to the TrpA family. As to quaternary structure, tetramer of two alpha and two beta chains.

The enzyme catalyses (1S,2R)-1-C-(indol-3-yl)glycerol 3-phosphate + L-serine = D-glyceraldehyde 3-phosphate + L-tryptophan + H2O. It participates in amino-acid biosynthesis; L-tryptophan biosynthesis; L-tryptophan from chorismate: step 5/5. Functionally, the alpha subunit is responsible for the aldol cleavage of indoleglycerol phosphate to indole and glyceraldehyde 3-phosphate. The sequence is that of Tryptophan synthase alpha chain from Deinococcus radiodurans (strain ATCC 13939 / DSM 20539 / JCM 16871 / CCUG 27074 / LMG 4051 / NBRC 15346 / NCIMB 9279 / VKM B-1422 / R1).